The chain runs to 571 residues: Urease subunit alpha (571 aa).

A Urease domain is found at 129-571; sequence GGIDSHIHFI…LPMAQRYFLF (443 aa). 3 residues coordinate Ni(2+): His134, His136, and Lys217. Lys217 is subject to N6-carboxylysine. His219 lines the substrate pocket. Residues His246 and His272 each coordinate Ni(2+). The active-site Proton donor is His320. A Ni(2+)-binding site is contributed by Asp360.

The protein belongs to the metallo-dependent hydrolases superfamily. Urease alpha subunit family. In terms of assembly, heterotrimer of UreA (gamma), UreB (beta) and UreC (alpha) subunits. Three heterotrimers associate to form the active enzyme. Requires Ni cation as cofactor. Post-translationally, carboxylation allows a single lysine to coordinate two nickel ions.

It is found in the cytoplasm. It carries out the reaction urea + 2 H2O + H(+) = hydrogencarbonate + 2 NH4(+). Its pathway is nitrogen metabolism; urea degradation; CO(2) and NH(3) from urea (urease route): step 1/1. The protein is Urease subunit alpha of Cupriavidus necator (strain ATCC 17699 / DSM 428 / KCTC 22496 / NCIMB 10442 / H16 / Stanier 337) (Ralstonia eutropha).